A 157-amino-acid chain; its full sequence is Large ribosomal subunit protein uL15 (157 aa).

Positions 1–41 (MKLHELSDNPGATKKRKRVGRGPGSGTGKMGGRGIKGQKSR) are disordered. The segment covering 21–35 (RGPGSGTGKMGGRGI) has biased composition (gly residues).

It belongs to the universal ribosomal protein uL15 family. As to quaternary structure, part of the 50S ribosomal subunit.

Binds to the 23S rRNA. This chain is Large ribosomal subunit protein uL15, found in Jannaschia sp. (strain CCS1).